We begin with the raw amino-acid sequence, 1497 residues long: DNA-directed RNA polymerase subunit beta' (1497 aa).

C67, C69, C82, and C85 together coordinate Zn(2+). Residues D499, D501, and D503 each coordinate Mg(2+). Zn(2+) contacts are provided by C867, C943, C950, and C953. The interval 1476-1497 (ESNATERVVEEPATREGFANER) is disordered. A compositionally biased stretch (basic and acidic residues) spans 1482–1497 (RVVEEPATREGFANER).

The protein belongs to the RNA polymerase beta' chain family. The RNAP catalytic core consists of 2 alpha, 1 beta, 1 beta' and 1 omega subunit. When a sigma factor is associated with the core the holoenzyme is formed, which can initiate transcription. The cofactor is Mg(2+). Zn(2+) serves as cofactor.

The enzyme catalyses RNA(n) + a ribonucleoside 5'-triphosphate = RNA(n+1) + diphosphate. DNA-dependent RNA polymerase catalyzes the transcription of DNA into RNA using the four ribonucleoside triphosphates as substrates. In Pelodictyon phaeoclathratiforme (strain DSM 5477 / BU-1), this protein is DNA-directed RNA polymerase subunit beta'.